We begin with the raw amino-acid sequence, 331 residues long: Lipoyl synthase (331 aa).

The interval 1–33 (MSDALIASSSEAPQSPAEQYDPTRKQKSADKTA) is disordered. A compositionally biased stretch (low complexity) spans 7–19 (ASSSEAPQSPAEQ). A compositionally biased stretch (basic and acidic residues) spans 21-33 (DPTRKQKSADKTA). The [4Fe-4S] cluster site is built by cysteine 78, cysteine 83, cysteine 89, cysteine 104, cysteine 108, cysteine 111, and serine 318. Positions 89–307 (CFGKGTATFM…EEEAYKMGFT (219 aa)) constitute a Radical SAM core domain.

It belongs to the radical SAM superfamily. Lipoyl synthase family. Requires [4Fe-4S] cluster as cofactor.

Its subcellular location is the cytoplasm. The catalysed reaction is [[Fe-S] cluster scaffold protein carrying a second [4Fe-4S](2+) cluster] + N(6)-octanoyl-L-lysyl-[protein] + 2 oxidized [2Fe-2S]-[ferredoxin] + 2 S-adenosyl-L-methionine + 4 H(+) = [[Fe-S] cluster scaffold protein] + N(6)-[(R)-dihydrolipoyl]-L-lysyl-[protein] + 4 Fe(3+) + 2 hydrogen sulfide + 2 5'-deoxyadenosine + 2 L-methionine + 2 reduced [2Fe-2S]-[ferredoxin]. It participates in protein modification; protein lipoylation via endogenous pathway; protein N(6)-(lipoyl)lysine from octanoyl-[acyl-carrier-protein]: step 2/2. Functionally, catalyzes the radical-mediated insertion of two sulfur atoms into the C-6 and C-8 positions of the octanoyl moiety bound to the lipoyl domains of lipoate-dependent enzymes, thereby converting the octanoylated domains into lipoylated derivatives. The sequence is that of Lipoyl synthase from Cupriavidus pinatubonensis (strain JMP 134 / LMG 1197) (Cupriavidus necator (strain JMP 134)).